A 465-amino-acid chain; its full sequence is GTPase Der (465 aa).

2 consecutive EngA-type G domains span residues 3–166 and 184–358; these read FLVA…LNEY and IHFS…ACAN. GTP-binding positions include 9–16, 56–60, 118–121, 190–197, 237–241, and 302–305; these read GRANVGKS, DTGGI, NKVD, GRPNVGKS, DTAGV, and NKWD. The 85-residue stretch at 359-443 folds into the KH-like domain; the sequence is KKITTADATR…PIVFEFKQSE (85 aa). The interval 446–465 is disordered; it reads FADRKNKRSKDEGSKSKKVK.

It belongs to the TRAFAC class TrmE-Era-EngA-EngB-Septin-like GTPase superfamily. EngA (Der) GTPase family. In terms of assembly, associates with the 50S ribosomal subunit.

In terms of biological role, GTPase that plays an essential role in the late steps of ribosome biogenesis. This Francisella tularensis subsp. tularensis (strain WY96-3418) protein is GTPase Der.